A 1735-amino-acid polypeptide reads, in one-letter code: Cadherin-AgCad1 (1735 aa).

The N-terminal stretch at 1-30 is a signal peptide; the sequence is MKCVASKFNMWLHLGWLLGLLLVLLPLVRC. The Extracellular segment spans residues 31–1574; that stretch reads QGWGEPRFET…ALTEADETLQ (1544 aa). Positions 166–1456 are extracellular domain (EC); it reads VTDCLFNVYH…KVYIVSESNR (1291 aa). 11 consecutive Cadherin domains span residues 171–273, 280–378, 379–498, 499–620, 621–757, 767–866, 879–983, 985–1109, 1136–1235, 1255–1350, and 1351–1461; these read FNVY…PPIF, ERIM…IPEI, YMKP…VPKF, GRDE…PPQI, TLPR…APYF, SVKE…QPYH, EKIP…TPKL, ELAA…TPSI, GSPL…EPTF, AEDP…PPVF, and QQRL…TFVF. 2 short sequence motifs (toxin-binding receptor motif) span residues 1344–1350 and 1446–1456; these read NDNPPVF and AKVYIVSESNR. Residues 1358–1569 are CR11-MPED, increases toxicity of activated Cry4B toxin, peptide alone is not toxic; the sequence is GITTNDRVPK…PLATEALTEA (212 aa). A membrane-proximal EC domain (MPED) region spans residues 1457–1569; sequence VTFVFLNSVE…PLATEALTEA (113 aa). A helical membrane pass occupies residues 1575 to 1595; sequence IILIVVSAALAVLCVILFVAF. The Cytoplasmic segment spans residues 1596-1735; sequence FIKIRSLNRQ…ETDDELSHRF (140 aa). Over residues 1701–1719 the composition is skewed to polar residues; the sequence is SLNPMANGTDKSNDGAPTS. The segment at 1701–1735 is disordered; that stretch reads SLNPMANGTDKSNDGAPTSNHKKLDETDDELSHRF. Over residues 1722 to 1735 the composition is skewed to basic and acidic residues; it reads KKLDETDDELSHRF.

In terms of tissue distribution, larval midgut (at protein level).

Its subcellular location is the apical cell membrane. The protein resides in the cell projection. The protein localises to the microvillus membrane. Its function is as follows. Cadherins are calcium-dependent cell adhesion proteins. They preferentially interact with themselves in a homophilic manner in connecting cells. In terms of biological role, (Microbial infection) Binds to and is probably the functional receptor for B.thuringiensis subsp. israelensis (Bti) insecticidal toxin Cry4B. Trichoplusia ni insect cells stably transfected with this protein become suspectible to Cry4B; cells undergo oncosis, they bleb and ruffle after 20-40 minutes, swell after 40-60 minutes and lyse after 90 minutes. Following toxin treatment in the T.in insect system levels of intracellular 3',5'-cyclic AMP (cAMP) rise 12.5-fold; EDTA but not EGTA pretreatment prevents cAMP increase. Inorganic phosphate also rises 3.4-fold after toxin treatment. The chain is Cadherin-AgCad1 from Anopheles gambiae (African malaria mosquito).